The primary structure comprises 75 residues: Small ribosomal subunit protein bS18 (75 aa).

At Ala2 the chain carries N-acetylalanine.

Belongs to the bacterial ribosomal protein bS18 family. As to quaternary structure, part of the 30S ribosomal subunit. Forms a tight heterodimer with protein bS6.

Its function is as follows. Binds as a heterodimer with protein bS6 to the central domain of the 16S rRNA, where it helps stabilize the platform of the 30S subunit. This Salmonella typhimurium (strain LT2 / SGSC1412 / ATCC 700720) protein is Small ribosomal subunit protein bS18 (rpsR).